We begin with the raw amino-acid sequence, 208 residues long: FMN-dependent NADH:quinone oxidoreductase (208 aa).

Residues Ser10, 16–18 (SVS), 94–97 (MYNF), and 138–141 (SRGG) each bind FMN.

The protein belongs to the azoreductase type 1 family. Homodimer. FMN serves as cofactor.

It catalyses the reaction 2 a quinone + NADH + H(+) = 2 a 1,4-benzosemiquinone + NAD(+). It carries out the reaction N,N-dimethyl-1,4-phenylenediamine + anthranilate + 2 NAD(+) = 2-(4-dimethylaminophenyl)diazenylbenzoate + 2 NADH + 2 H(+). Quinone reductase that provides resistance to thiol-specific stress caused by electrophilic quinones. In terms of biological role, also exhibits azoreductase activity. Catalyzes the reductive cleavage of the azo bond in aromatic azo compounds to the corresponding amines. The polypeptide is FMN-dependent NADH:quinone oxidoreductase (Hyphomonas neptunium (strain ATCC 15444)).